We begin with the raw amino-acid sequence, 423 residues long: Dihydrolipoyllysine-residue succinyltransferase component of 2-oxoglutarate dehydrogenase complex (423 aa).

In terms of domain architecture, Lipoyl-binding spans 1–76 (MPEVKVPELA…EVGQAIAVIG (76 aa)). K42 is modified (N6-lipoyllysine). Residues 76–185 (GEGSGNASKE…APAKEEKKYN (110 aa)) are disordered. The span at 80-96 (GNASKENSNDNTPQQND) shows a compositional bias: polar residues. Over residues 99-115 (TNNKKEETTNKSADKAE) the composition is skewed to basic and acidic residues. Residues 116 to 131 (VNQTNDDNQQRVNATP) show a composition bias toward polar residues. The Peripheral subunit-binding (PSBD) domain maps to 128–164 (NATPSARRYARENGVNLAEVSPKTNDVVRKEDIDKKQ). Residues 153 to 164 (DVVRKEDIDKKQ) show a composition bias toward basic and acidic residues. Low complexity predominate over residues 165–177 (QAPASTQTTQQAP). Residues H394 and D398 contribute to the active site.

The protein belongs to the 2-oxoacid dehydrogenase family. As to quaternary structure, forms a 24-polypeptide structural core with octahedral symmetry. Part of the 2-oxoglutarate dehydrogenase (OGDH) complex composed of E1 (2-oxoglutarate dehydrogenase), E2 (dihydrolipoamide succinyltransferase) and E3 (dihydrolipoamide dehydrogenase); the complex contains multiple copies of the three enzymatic components (E1, E2 and E3). (R)-lipoate is required as a cofactor.

It carries out the reaction N(6)-[(R)-dihydrolipoyl]-L-lysyl-[protein] + succinyl-CoA = N(6)-[(R)-S(8)-succinyldihydrolipoyl]-L-lysyl-[protein] + CoA. It functions in the pathway amino-acid degradation; L-lysine degradation via saccharopine pathway; glutaryl-CoA from L-lysine: step 6/6. Functionally, E2 component of the 2-oxoglutarate dehydrogenase (OGDH) complex which catalyzes the second step in the conversion of 2-oxoglutarate to succinyl-CoA and CO(2). The chain is Dihydrolipoyllysine-residue succinyltransferase component of 2-oxoglutarate dehydrogenase complex (odhB) from Staphylococcus aureus (strain MRSA252).